The primary structure comprises 208 residues: ATP-dependent Clp protease proteolytic subunit (208 aa).

Ser106 (nucleophile) is an active-site residue. His131 is an active-site residue.

The protein belongs to the peptidase S14 family. Fourteen ClpP subunits assemble into 2 heptameric rings which stack back to back to give a disk-like structure with a central cavity, resembling the structure of eukaryotic proteasomes.

The protein localises to the cytoplasm. The catalysed reaction is Hydrolysis of proteins to small peptides in the presence of ATP and magnesium. alpha-casein is the usual test substrate. In the absence of ATP, only oligopeptides shorter than five residues are hydrolyzed (such as succinyl-Leu-Tyr-|-NHMec, and Leu-Tyr-Leu-|-Tyr-Trp, in which cleavage of the -Tyr-|-Leu- and -Tyr-|-Trp bonds also occurs).. Cleaves peptides in various proteins in a process that requires ATP hydrolysis. Has a chymotrypsin-like activity. Plays a major role in the degradation of misfolded proteins. The chain is ATP-dependent Clp protease proteolytic subunit from Dinoroseobacter shibae (strain DSM 16493 / NCIMB 14021 / DFL 12).